Consider the following 422-residue polypeptide: Secernin-3 (422 aa).

The propeptide occupies 1 to 5 (MEPCS). Residue C6 is part of the active site. C6 carries the glyoxylic acid (Cys); alternate modification. C6 bears the Pyruvic acid (Cys); alternate mark.

This sequence belongs to the peptidase C69 family. Secernin subfamily.

In terms of biological role, plays a role in thermal nociception. The polypeptide is Secernin-3 (SCRN3) (Bos taurus (Bovine)).